The primary structure comprises 159 residues: MANVVEALVSGGKATAGPPLGPALGPLGVNVAAVVAKINELTKDLNGMQVPVKIIVKSRTEFEIEVGTPPTSALLLKEAGVEKGSGDKKNFVGDISMDQVIKVAEIKRKNLLSSNLKSAVSEIVGTCGTLGIKIDGLTSKEVQKALASGSYDHLFEAKS.

It belongs to the universal ribosomal protein uL11 family. In terms of assembly, part of the ribosomal stalk of the 50S ribosomal subunit. Interacts with L10 and the large rRNA to form the base of the stalk. L10 forms an elongated spine to which L12 dimers bind in a sequential fashion forming a multimeric L10(L12)X complex.

In terms of biological role, forms part of the ribosomal stalk which helps the ribosome interact with GTP-bound translation factors. In Methanothrix thermoacetophila (strain DSM 6194 / JCM 14653 / NBRC 101360 / PT) (Methanosaeta thermophila), this protein is Large ribosomal subunit protein uL11.